The chain runs to 419 residues: 2-amino-3-ketobutyrate coenzyme A ligase, mitochondrial (419 aa).

A mitochondrion-targeting transit peptide spans 1 to 21; that stretch reads MWAGRVLHAALSRAPRESRAQ. Position 45 is an N6-acetyllysine; alternate (Lys45). Lys45 is modified (N6-succinyllysine; alternate). 134–135 contributes to the pyridoxal 5'-phosphate binding site; sequence CF. His159 lines the substrate pocket. Lys187 carries the N6-acetyllysine; alternate modification. Lys187 is subject to N6-succinyllysine; alternate. Residues Ser206, 231–234, 262–265, and 295–296 each bind pyridoxal 5'-phosphate; these read DESH, TLGK, and SN. Lys265 carries the post-translational modification N6-(pyridoxal phosphate)lysine. Lys326 and Lys368 each carry N6-succinyllysine. Residue Lys383 is modified to N6-acetyllysine; alternate. Residue Lys383 is modified to N6-succinyllysine; alternate. A substrate-binding site is contributed by Arg389.

It belongs to the class-II pyridoxal-phosphate-dependent aminotransferase family. The cofactor is pyridoxal 5'-phosphate.

Its subcellular location is the mitochondrion. The protein localises to the nucleus. It carries out the reaction glycine + acetyl-CoA = (2S)-2-amino-3-oxobutanoate + CoA. The protein operates within amino-acid degradation; L-threonine degradation via oxydo-reductase pathway; glycine from L-threonine: step 2/2. Functionally, pyridoxal phosphate (PLP) dependent enzyme, which catalyzes the cleavage of 2-amino-3-oxobutanoate to glycine and acetyl-CoA. Catalyzes the second reaction step on the main metabolic degradation pathway for L-threonine. The chain is 2-amino-3-ketobutyrate coenzyme A ligase, mitochondrial (GCAT) from Bos taurus (Bovine).